The following is a 329-amino-acid chain: Alternative oxidase, mitochondrial (329 aa).

A helical transmembrane segment spans residues 115 to 135 (VISRCLFLETVAGVPGMVGGM). Positions 123, 162, and 165 each coordinate Fe cation. The chain crosses the membrane as a helical span at residues 181 to 201 (VSIIITQAIMYLFLLVAYVIS). Fe cation contacts are provided by glutamate 213, glutamate 266, and histidine 269. Positions 300 to 329 (EMYSNQPSGKTRTDFGSEGAKTASNVNKHV) are disordered.

Belongs to the alternative oxidase family. Homodimer; disulfide-linked. Requires Fe cation as cofactor.

The protein localises to the mitochondrion inner membrane. Its function is as follows. Catalyzes cyanide-resistant oxygen consumption. May increase respiration when the cytochrome respiratory pathway is restricted, or in response to low temperatures. This chain is Alternative oxidase, mitochondrial (AOX), found in Trypanosoma brucei brucei.